Consider the following 430-residue polypeptide: GTPase Obg (430 aa).

An Obg domain is found at 1-158 (MFVDQVTISL…LDVTLELKLL (158 aa)). The disordered stretch occupies residues 118 to 145 (RGGRGGRGNSRFATPRNPAPDFSENGEP). One can recognise an OBG-type G domain in the interval 159–329 (ADVGLVGFPS…LLYAIADKLD (171 aa)). GTP-binding positions include 165-172 (GFPSVGKS), 190-194 (FTTIK), 212-215 (DLPG), 282-285 (NKMD), and 310-312 (STI). Residues Ser-172 and Thr-192 each contribute to the Mg(2+) site. Residues 352–430 (KHTPSQDKFT…ILGGEFEFVE (79 aa)) form the OCT domain.

Belongs to the TRAFAC class OBG-HflX-like GTPase superfamily. OBG GTPase family. Monomer. The cofactor is Mg(2+).

The protein localises to the cytoplasm. An essential GTPase which binds GTP, GDP and possibly (p)ppGpp with moderate affinity, with high nucleotide exchange rates and a fairly low GTP hydrolysis rate. Plays a role in control of the cell cycle, stress response, ribosome biogenesis and in those bacteria that undergo differentiation, in morphogenesis control. In Staphylococcus haemolyticus (strain JCSC1435), this protein is GTPase Obg.